A 210-amino-acid chain; its full sequence is UPF0301 protein CPS_1252 (210 aa).

The protein belongs to the UPF0301 (AlgH) family.

The sequence is that of UPF0301 protein CPS_1252 from Colwellia psychrerythraea (strain 34H / ATCC BAA-681) (Vibrio psychroerythus).